The following is a 331-amino-acid chain: Anthranilate phosphoribosyltransferase (331 aa).

5-phospho-alpha-D-ribose 1-diphosphate-binding positions include glycine 79, 82 to 83 (GD), serine 87, 89 to 92 (NIST), 107 to 115 (KHCNTSISS), and serine 119. Glycine 79 contacts anthranilate. Serine 91 is a Mg(2+) binding site. Residue asparagine 110 coordinates anthranilate. Arginine 165 lines the anthranilate pocket. 2 residues coordinate Mg(2+): aspartate 223 and glutamate 224.

This sequence belongs to the anthranilate phosphoribosyltransferase family. In terms of assembly, homodimer. The cofactor is Mg(2+).

It catalyses the reaction N-(5-phospho-beta-D-ribosyl)anthranilate + diphosphate = 5-phospho-alpha-D-ribose 1-diphosphate + anthranilate. It participates in amino-acid biosynthesis; L-tryptophan biosynthesis; L-tryptophan from chorismate: step 2/5. Its function is as follows. Catalyzes the transfer of the phosphoribosyl group of 5-phosphorylribose-1-pyrophosphate (PRPP) to anthranilate to yield N-(5'-phosphoribosyl)-anthranilate (PRA). The chain is Anthranilate phosphoribosyltransferase from Buchnera aphidicola subsp. Schlechtendalia chinensis.